We begin with the raw amino-acid sequence, 238 residues long: MKIHQIHDFDLNDESDFIRTQQSLIHKINLSPVIHPDSVNTCAGVDLAYWEQDGEPYGVCSIIVIDADTKEVIEKVHSMGKISVPYVSGFLAFRELPLIIEAAEKLEAEPDVFLFDGNGYLHYNHMGVATHAAFFLGKPTIGIAKTYLKIKGCDFEMPENEVGAYTDILIDGEVYGRALRTRRDVKPIFLSCGHNIDLESSYQITMKMINRDSRLPIPVRLADLETHVLRTFYRKNHV.

Residues Asp-46 and Asp-116 each coordinate Mg(2+).

It belongs to the endonuclease V family. Requires Mg(2+) as cofactor.

The protein resides in the cytoplasm. It carries out the reaction Endonucleolytic cleavage at apurinic or apyrimidinic sites to products with a 5'-phosphate.. Its function is as follows. DNA repair enzyme involved in the repair of deaminated bases. Selectively cleaves double-stranded DNA at the second phosphodiester bond 3' to a deoxyinosine leaving behind the intact lesion on the nicked DNA. This is Endonuclease V from Bacillus velezensis (strain DSM 23117 / BGSC 10A6 / LMG 26770 / FZB42) (Bacillus amyloliquefaciens subsp. plantarum).